The sequence spans 548 residues: Glucose-6-phosphate isomerase 1 (548 aa).

Residue E353 is the Proton donor of the active site. Active-site residues include H384 and K495.

Belongs to the GPI family.

It is found in the cytoplasm. It carries out the reaction alpha-D-glucose 6-phosphate = beta-D-fructose 6-phosphate. Its pathway is carbohydrate biosynthesis; gluconeogenesis. It functions in the pathway carbohydrate degradation; glycolysis; D-glyceraldehyde 3-phosphate and glycerone phosphate from D-glucose: step 2/4. Its function is as follows. Catalyzes the reversible isomerization of glucose-6-phosphate to fructose-6-phosphate. The chain is Glucose-6-phosphate isomerase 1 from Chromohalobacter salexigens (strain ATCC BAA-138 / DSM 3043 / CIP 106854 / NCIMB 13768 / 1H11).